A 226-amino-acid chain; its full sequence is NADH-quinone oxidoreductase subunit B 2 (226 aa).

[4Fe-4S] cluster contacts are provided by Cys37, Cys38, Cys103, and Cys132.

The protein belongs to the complex I 20 kDa subunit family. In terms of assembly, NDH-1 is composed of 14 different subunits. Subunits NuoB, C, D, E, F, and G constitute the peripheral sector of the complex. Requires [4Fe-4S] cluster as cofactor.

The protein localises to the cell membrane. The catalysed reaction is a quinone + NADH + 5 H(+)(in) = a quinol + NAD(+) + 4 H(+)(out). In terms of biological role, NDH-1 shuttles electrons from NADH, via FMN and iron-sulfur (Fe-S) centers, to quinones in the respiratory chain. The immediate electron acceptor for the enzyme in this species is believed to be a menaquinone. Couples the redox reaction to proton translocation (for every two electrons transferred, four hydrogen ions are translocated across the cytoplasmic membrane), and thus conserves the redox energy in a proton gradient. The protein is NADH-quinone oxidoreductase subunit B 2 of Salinispora arenicola (strain CNS-205).